We begin with the raw amino-acid sequence, 207 residues long: Guanylate kinase (207 aa).

A Guanylate kinase-like domain is found at 6-185 (GLLIVLSGPS…AKERIQSIVE (180 aa)). 13 to 20 (GPSGVGKG) contacts ATP.

This sequence belongs to the guanylate kinase family.

The protein resides in the cytoplasm. The enzyme catalyses GMP + ATP = GDP + ADP. Its function is as follows. Essential for recycling GMP and indirectly, cGMP. This Staphylococcus haemolyticus (strain JCSC1435) protein is Guanylate kinase.